Consider the following 303-residue polypeptide: 2-dehydropantoate 2-reductase (303 aa).

Residues glycine 7 to glycine 12, asparagine 98, and alanine 122 contribute to the NADP(+) site. Asparagine 98 is a substrate binding site. Lysine 176 serves as the catalytic Proton donor. Substrate contacts are provided by asparagine 180, asparagine 184, asparagine 194, and serine 244. Glutamate 256 lines the NADP(+) pocket.

Belongs to the ketopantoate reductase family. Monomer.

Its subcellular location is the cytoplasm. The catalysed reaction is (R)-pantoate + NADP(+) = 2-dehydropantoate + NADPH + H(+). It participates in cofactor biosynthesis; (R)-pantothenate biosynthesis; (R)-pantoate from 3-methyl-2-oxobutanoate: step 2/2. Its function is as follows. Catalyzes the NADPH-dependent reduction of ketopantoate into pantoic acid. Has a strong preference for NADPH over NADH as the electron acceptor. Pantoate, ketoisovalerate, oxaloacetate, pyruvate, 3-hydroxypyruvate, alpha-ketoglutarate, alpha-ketobutyrate, and acetaldehyde cannot serve as substrates for reduction. This chain is 2-dehydropantoate 2-reductase, found in Salmonella typhimurium (strain LT2 / SGSC1412 / ATCC 700720).